The following is a 408-amino-acid chain: Beta-ureidopropionase (408 aa).

The CN hydrolase domain occupies 90-360; it reads VRVGLIQNSI…DGLLISDMDL (271 aa). Glu137 acts as the Proton acceptor in catalysis. Lys212 functions as the Proton donor in the catalytic mechanism. Cys249 functions as the Nucleophile in the catalytic mechanism.

This sequence belongs to the carbon-nitrogen hydrolase superfamily. BUP family. Homodimer, homotetramer, homooctamer; can also form higher homooligomers.

It localises to the cytoplasm. It catalyses the reaction 3-(carbamoylamino)propanoate + H2O + 2 H(+) = beta-alanine + NH4(+) + CO2. The enzyme catalyses 3-(carbamoylamino)-2-methylpropanoate + H2O + 2 H(+) = (R)-3-amino-2-methylpropanoate + NH4(+) + CO2. It functions in the pathway amino-acid biosynthesis; beta-alanine biosynthesis. In terms of biological role, catalyzes a late step in pyrimidine degradation. Converts N-carbamoyl-beta-aminoisobutyrate and N-carbamoyl-beta-alanine (3-ureidopropanoate) to, respectively, beta-aminoisobutyrate and beta-alanine, ammonia and carbon dioxide. Involved in the recycling of nitrogen from nucleobases to general nitrogen metabolism. This Arabidopsis thaliana (Mouse-ear cress) protein is Beta-ureidopropionase.